The sequence spans 126 residues: Prefoldin subunit beta (126 aa).

It belongs to the prefoldin subunit beta family. As to quaternary structure, heterohexamer of two alpha and four beta subunits.

It is found in the cytoplasm. Molecular chaperone capable of stabilizing a range of proteins. Seems to fulfill an ATP-independent, HSP70-like function in archaeal de novo protein folding. In Saccharolobus islandicus (strain Y.N.15.51 / Yellowstone #2) (Sulfolobus islandicus), this protein is Prefoldin subunit beta.